The chain runs to 247 residues: Segregation and condensation protein A (247 aa).

It belongs to the ScpA family. Component of a cohesin-like complex composed of ScpA, ScpB and the Smc homodimer, in which ScpA and ScpB bind to the head domain of Smc. The presence of the three proteins is required for the association of the complex with DNA.

The protein resides in the cytoplasm. Its function is as follows. Participates in chromosomal partition during cell division. May act via the formation of a condensin-like complex containing Smc and ScpB that pull DNA away from mid-cell into both cell halves. In Caldanaerobacter subterraneus subsp. tengcongensis (strain DSM 15242 / JCM 11007 / NBRC 100824 / MB4) (Thermoanaerobacter tengcongensis), this protein is Segregation and condensation protein A.